We begin with the raw amino-acid sequence, 302 residues long: Meiotic recombination protein rec14 (302 aa).

WD repeat units follow at residues 14–51 (AHQA…HSLV), 57–96 (PHKL…FRDL), 101–140 (QHPS…KISE), 142–184 (DTKG…HVLS), 185–226 (GHTS…GQLR), 227–266 (GHAA…CIST), and 269–302 (ETDG…AATE).

As to quaternary structure, component of the DSB catalytic core (DSBC) complex, composed of at least rec12, rec6 and rec14. The complex interacts with mde2.

Its function is as follows. Required for formation of the rec12-mediated double-strand breaks (DSBs) that initiate meiotic recombination. The protein is Meiotic recombination protein rec14 of Schizosaccharomyces pombe (strain 972 / ATCC 24843) (Fission yeast).